The chain runs to 115 residues: Probable non-functional T cell receptor beta variable 7-1 (115 aa).

Positions 1-21 are cleaved as a signal peptide; it reads MGTRLLCWAAICLLGADHTGA. Residues 22–115 enclose the Ig-like domain; that stretch reads GVSQSLRHKV…LAVYLCASSS (94 aa).

Most probably, the alpha-beta TR is not assembled due to incorrect folding of the beta chain. Alpha-beta TR is a heterodimer composed of an alpha and beta chain; disulfide-linked. The alpha-beta TR is associated with the transmembrane signaling CD3 coreceptor proteins to form the TR-CD3 (TcR or TCR). The assembly of alpha-beta TR heterodimers with CD3 occurs in the endoplasmic reticulum where a single alpha-beta TR heterodimer associates with one CD3D-CD3E heterodimer, one CD3G-CD3E heterodimer and one CD247 homodimer forming a stable octameric structure. CD3D-CD3E and CD3G-CD3E heterodimers preferentially associate with TR alpha and TR beta chains, respectively. The association of the CD247 homodimer is the last step of TcR assembly in the endoplasmic reticulum and is required for transport to the cell surface.

It is found in the cell membrane. Functionally, probable non-functional open reading frame (ORF) of V region of the variable domain of T cell receptor (TR) beta chain. Non-functional ORF generally cannot participate in the synthesis of a productive T cell receptor (TR) chain due to altered V-(D)-J or switch recombination and/or splicing site (at mRNA level) and/or conserved amino acid change (protein level). Alpha-beta T cell receptors are antigen specific receptors which are essential to the immune response and are present on the cell surface of T lymphocytes. Recognize peptide-major histocompatibility (MH) (pMH) complexes that are displayed by antigen presenting cells (APC), a prerequisite for efficient T cell adaptive immunity against pathogens. Binding of alpha-beta TR to pMH complex initiates TR-CD3 clustering on the cell surface and intracellular activation of LCK that phosphorylates the ITAM motifs of CD3G, CD3D, CD3E and CD247 enabling the recruitment of ZAP70. In turn ZAP70 phosphorylates LAT, which recruits numerous signaling molecules to form the LAT signalosome. The LAT signalosome propagates signal branching to three major signaling pathways, the calcium, the mitogen-activated protein kinase (MAPK) kinase and the nuclear factor NF-kappa-B (NF-kB) pathways, leading to the mobilization of transcription factors that are critical for gene expression and essential for T cell growth and differentiation. The T cell repertoire is generated in the thymus, by V-(D)-J rearrangement. This repertoire is then shaped by intrathymic selection events to generate a peripheral T cell pool of self-MH restricted, non-autoaggressive T cells. Post-thymic interaction of alpha-beta TR with the pMH complexes shapes TR structural and functional avidity. The protein is Probable non-functional T cell receptor beta variable 7-1 of Homo sapiens (Human).